We begin with the raw amino-acid sequence, 206 residues long: Protein phosphatase inhibitor 2 (206 aa).

The segment at 1–36 (MAASTASHRPIKGILKNKTSAASPPVVPSAEQPRPI) is disordered. N-acetylalanine is present on alanine 2. Positions 12 to 17 (KGILKN) are required for binding PPP1CC. A required for binding the 'RVXF' binding groove of PPP1CC region spans residues 44 to 56 (KSQKWDEMNILAT). Position 45 is a phosphoserine; by ATM (serine 45). Threonine 74 carries the phosphothreonine modification. The tract at residues 75 to 143 (PYHNMIGDDE…EREKKRQFEM (69 aa)) is disordered. The span at 81-92 (GDDEDAYSDSEG) shows a compositional bias: acidic residues. Residues serine 88 and serine 90 each carry the phosphoserine modification. Residues threonine 97 and threonine 117 each carry the phosphothreonine modification. Basic and acidic residues predominate over residues 111–121 (SEPKYRTREQE). Residues serine 122, serine 123, and serine 131 each carry the phosphoserine modification. Acidic residues predominate over residues 122–131 (SSGEEDNDLS). A compositionally biased stretch (basic and acidic residues) spans 132–143 (PEEREKKRQFEM). Residues 148–151 (HYNE) are required for binding PPP1CC catalytic center, displacing metal ions and inhibition of PPP1CC catalytic activity. The disordered stretch occupies residues 164-206 (KDLHDDDEDEEMAETADGDSMNVEESSQGSTTSDHLQHKSQSS). Over residues 168–180 (DDDEDEEMAETAD) the composition is skewed to acidic residues. Over residues 186 to 206 (VEESSQGSTTSDHLQHKSQSS) the composition is skewed to polar residues.

Belongs to the protein phosphatase inhibitor 2 family. In terms of assembly, heterodimer with PP1. Post-translationally, phosphorylation on Ser-45 by ATM activates PP1 by dissociating the PP1-PPP1R2 complex. Phosphorylation on Thr-74 by GSK3 activates PP1 by dissociating the PP1-PPP1R2 complex.

In terms of biological role, inhibitor of protein-phosphatase 1. The sequence is that of Protein phosphatase inhibitor 2 (Ppp1r2) from Mus musculus (Mouse).